The chain runs to 327 residues: Interleukin-12 subunit beta (327 aa).

An N-terminal signal peptide occupies residues 1–22 (MCLQQLVISWVSLVWLASPLLA). Residues 23–106 (IWELEKNVYV…LSQMLLLLHK (84 aa)) enclose the Ig-like C2-type domain. Cys-50 and Cys-90 are oxidised to a cystine. N-linked (GlcNAc...) asparagine glycans are attached at residues Asn-134 and Asn-152. Residues 237–327 (PPKNLKMKPS…WSEWATMSCP (91 aa)) enclose the Fibronectin type-III domain.

Belongs to the IL-12B family. As to quaternary structure, heterodimer with IL12A; disulfide-linked. The heterodimer is known as interleukin IL-12. Heterodimer with IL23A; disulfide-linked. The heterodimer is known as interleukin IL-23. Also secreted as a monomer. Interacts with NBR1; this interaction promotes IL-12 secretion.

It localises to the secreted. In terms of biological role, cytokine that can act as a growth factor for activated T and NK cells, enhance the lytic activity of NK/lymphokine-activated killer cells, and stimulate the production of IFN-gamma by resting PBMC. Its function is as follows. Associates with IL23A to form the IL-23 interleukin, a heterodimeric cytokine which functions in innate and adaptive immunity. IL-23 may constitute with IL-17 an acute response to infection in peripheral tissues. IL-23 binds to a heterodimeric receptor complex composed of IL12RB1 and IL23R, activates the Jak-Stat signaling cascade, stimulates memory rather than naive T-cells and promotes production of pro-inflammatory cytokines. IL-23 induces autoimmune inflammation and thus may be responsible for autoimmune inflammatory diseases and may be important for tumorigenesis. The sequence is that of Interleukin-12 subunit beta (IL12B) from Marmota monax (Woodchuck).